The chain runs to 512 residues: 2-isopropylmalate synthase (512 aa).

Residues 5-268 (LIIFDTTLRD…DVGIDTQHIV (264 aa)) enclose the Pyruvate carboxyltransferase domain. Residues Asp14, His202, His204, and Asn239 each coordinate Mn(2+). Residues 394–512 (GFVSLAQHSE…SKAERVAAQG (119 aa)) are regulatory domain.

The protein belongs to the alpha-IPM synthase/homocitrate synthase family. LeuA type 1 subfamily. Homodimer. Mn(2+) is required as a cofactor.

Its subcellular location is the cytoplasm. It carries out the reaction 3-methyl-2-oxobutanoate + acetyl-CoA + H2O = (2S)-2-isopropylmalate + CoA + H(+). The protein operates within amino-acid biosynthesis; L-leucine biosynthesis; L-leucine from 3-methyl-2-oxobutanoate: step 1/4. Catalyzes the condensation of the acetyl group of acetyl-CoA with 3-methyl-2-oxobutanoate (2-ketoisovalerate) to form 3-carboxy-3-hydroxy-4-methylpentanoate (2-isopropylmalate). The protein is 2-isopropylmalate synthase of Acidovorax ebreus (strain TPSY) (Diaphorobacter sp. (strain TPSY)).